Consider the following 303-residue polypeptide: Acetylglutamate kinase (303 aa).

Substrate-binding positions include 69-70 (GG), Arg-91, and Asn-201.

The protein belongs to the acetylglutamate kinase family. ArgB subfamily.

The protein resides in the cytoplasm. The catalysed reaction is N-acetyl-L-glutamate + ATP = N-acetyl-L-glutamyl 5-phosphate + ADP. It participates in amino-acid biosynthesis; L-arginine biosynthesis; N(2)-acetyl-L-ornithine from L-glutamate: step 2/4. Functionally, catalyzes the ATP-dependent phosphorylation of N-acetyl-L-glutamate. The chain is Acetylglutamate kinase from Novosphingobium aromaticivorans (strain ATCC 700278 / DSM 12444 / CCUG 56034 / CIP 105152 / NBRC 16084 / F199).